The primary structure comprises 337 residues: Nodulation protein D 2 (337 aa).

The HTH lysR-type domain maps to 6–63 (LDLNLLVVLDSLMTARNLTAAARSINLSQPAMSAAVARLRAYFGDELFTMRGRTLVPT). A DNA-binding region (H-T-H motif) is located at residues 23–42 (LTAAARSINLSQPAMSAAVA).

This sequence belongs to the LysR transcriptional regulatory family.

In terms of biological role, nodD regulates the expression of the nodABCFE genes which encode other nodulation proteins. NodD is also a negative regulator of its own expression. Binds flavonoids as inducers. This Bradyrhizobium sp. (strain NC92) protein is Nodulation protein D 2 (nodD2).